The sequence spans 173 residues: Superoxide dismutase [Cu-Zn] 2 (173 aa).

A signal peptide spans 1–19 (MKRLSLAMVTLLACAGAQA). The Cu cation site is built by His-67, His-69, and His-92. The cysteines at positions 74 and 169 are disulfide-linked. Residues His-92, His-101, His-109, and Asp-112 each contribute to the Zn(2+) site. Cu cation is bound at residue His-147.

The protein belongs to the Cu-Zn superoxide dismutase family. As to quaternary structure, monomer. Cu cation is required as a cofactor. The cofactor is Zn(2+).

The protein localises to the periplasm. The catalysed reaction is 2 superoxide + 2 H(+) = H2O2 + O2. Functionally, destroys radicals which are normally produced within the cells and which are toxic to biological systems. This chain is Superoxide dismutase [Cu-Zn] 2 (sodC), found in Salmonella typhimurium (strain LT2 / SGSC1412 / ATCC 700720).